We begin with the raw amino-acid sequence, 792 residues long: Alpha-1,6-mannosylglycoprotein 6-beta-N-acetylglucosaminyltransferase B (792 aa).

Over 1-24 (MITVNPDGKIMVRRCLVTLRPFRL) the chain is Cytoplasmic. The helical; Signal-anchor for type II membrane protein transmembrane segment at 25–45 (FVLGIGFFTLCFLMTSLGGQF) threads the bilayer. Residues 46 to 792 (SARRLGDSPF…GQVALCQGCL (747 aa)) are Lumenal-facing. Residue N127 is glycosylated (N-linked (GlcNAc...) asparagine). 4 cysteine pairs are disulfide-bonded: C157–C195, C168–C208, C184–C353, and C387–C644. N-linked (GlcNAc...) asparagine glycosylation occurs at N675. 5 disulfide bridges follow: C700-C775, C704-C777, C711-C764, C732-C753, and C788-C791.

It belongs to the glycosyltransferase 18 family. Requires Mn(2+) as cofactor. Present in brain (at protein level). Predominantly expressed in hippocampus, superficial layers of the brain cortex, striatum, nucleus accumbens, a subset of nuclei in the thalamus, inferior colliculus, brain stem and cerebellum.

Its subcellular location is the golgi apparatus membrane. The enzyme catalyses N(4)-{beta-D-GlcNAc-(1-&gt;2)-[beta-D-GlcNAc-(1-&gt;4)]-alpha-D-Man-(1-&gt;3)-[beta-D-GlcNAc-(1-&gt;2)-alpha-D-Man-(1-&gt;6)]-beta-D-Man-(1-&gt;4)-beta-D-GlcNAc-(1-&gt;4)-beta-D-GlcNAc}-L-asparaginyl-[protein] + UDP-N-acetyl-alpha-D-glucosamine = N(4)-{beta-D-GlcNAc-(1-&gt;2)-[beta-D-GlcNAc-(1-&gt;4)]-alpha-D-Man-(1-&gt;3)-[beta-D-GlcNAc-(1-&gt;2)-[beta-D-GlcNAc-(1-&gt;6)]-alpha-D-Man-(1-&gt;6)]-beta-D-Man-(1-&gt;4)-beta-D-GlcNAc-(1-&gt;4)-beta-D-GlcNAc}-L-asparaginyl-[protein] + UDP + H(+). It catalyses the reaction 3-O-[N-acetyl-beta-D-glucosaminyl-(1-&gt;2)-alpha-D-mannosyl]-L-seryl-[protein] + UDP-N-acetyl-alpha-D-glucosamine = O(3)-{N-acetyl-beta-D-glucosaminyl-(1-&gt;2)-[N-acetyl-beta-D-glucosaminyl-(1-&gt;6)]-alpha-D-mannosyl}-L-seryl-[protein] + UDP + H(+). The catalysed reaction is 3-O-[N-acetyl-beta-D-glucosaminyl-(1-&gt;2)-alpha-D-mannosyl]-L-threonyl-[protein] + UDP-N-acetyl-alpha-D-glucosamine = O(3)-{N-acetyl-beta-D-glucosaminyl-(1-&gt;2)-[N-acetyl-beta-D-glucosaminyl-(1-&gt;6)]-alpha-D-mannosyl}-L-threonyl-[protein] + UDP + H(+). It functions in the pathway protein modification; protein glycosylation. In terms of biological role, glycosyltransferase that acts on alpha-linked mannose of N-glycans and O-mannosyl glycans. Catalyzes the transfer of N-acetylglucosamine (GlcNAc) to the beta 1-6 linkage of the mannose residue of GlcNAc-beta1,2-Man-alpha on both the alpha1,3- and alpha1,6-linked mannose arms in the core structure of N-glycan. Also acts on the GlcNAc-beta1,2-Man-alpha1-Ser/Thr moiety, forming a 2,6-branched structure in brain O-mannosyl glycan. Plays an active role in modulating integrin and laminin-dependent adhesion and migration of neuronal cells via its activity in the O-mannosyl glycan pathway. The chain is Alpha-1,6-mannosylglycoprotein 6-beta-N-acetylglucosaminyltransferase B (Mgat5b) from Mus musculus (Mouse).